The chain runs to 363 residues: tRNA(Met) cytidine acetate ligase (363 aa).

Residues 7–20 (IAEY…HKYL), Gly96, Asn152, and Arg175 each bind ATP.

This sequence belongs to the TmcAL family.

It is found in the cytoplasm. It carries out the reaction cytidine(34) in elongator tRNA(Met) + acetate + ATP = N(4)-acetylcytidine(34) in elongator tRNA(Met) + AMP + diphosphate. Catalyzes the formation of N(4)-acetylcytidine (ac(4)C) at the wobble position of elongator tRNA(Met), using acetate and ATP as substrates. First activates an acetate ion to form acetyladenylate (Ac-AMP) and then transfers the acetyl group to tRNA to form ac(4)C34. The protein is tRNA(Met) cytidine acetate ligase of Streptococcus suis (strain 98HAH33).